The following is a 237-amino-acid chain: Ribonuclease PH (237 aa).

Phosphate-binding positions include arginine 86 and 124-126; that span reads GTR.

This sequence belongs to the RNase PH family. Homohexameric ring arranged as a trimer of dimers.

The catalysed reaction is tRNA(n+1) + phosphate = tRNA(n) + a ribonucleoside 5'-diphosphate. Its function is as follows. Phosphorolytic 3'-5' exoribonuclease that plays an important role in tRNA 3'-end maturation. Removes nucleotide residues following the 3'-CCA terminus of tRNAs; can also add nucleotides to the ends of RNA molecules by using nucleoside diphosphates as substrates, but this may not be physiologically important. Probably plays a role in initiation of 16S rRNA degradation (leading to ribosome degradation) during starvation. In Cereibacter sphaeroides (strain KD131 / KCTC 12085) (Rhodobacter sphaeroides), this protein is Ribonuclease PH.